The chain runs to 381 residues: Opsin-1 (381 aa).

Over 1–53 (MASASLISEPSFSAYWGGSGGFANQTVVDKVPPEMLYLVDPHWYQFPPMNPLW) the chain is Extracellular. N-linked (GlcNAc...) asparagine glycosylation occurs at asparagine 24. Residues 54 to 78 (HGLLGFVIGVLGVISVIGNGMVIYI) traverse the membrane as a helical segment. The Cytoplasmic segment spans residues 79-90 (FSTTKSLRTPSN). The helical transmembrane segment at 91–115 (LLVVNLAFSDFLMMFTMSAPMGINC) threads the bilayer. At 116–130 (YYETWVLGPFMCELY) the chain is on the extracellular side. Residues cysteine 127 and cysteine 204 are joined by a disulfide bond. A helical transmembrane segment spans residues 131–150 (ALFGSLFGCGSIWTMTMIAL). The Cytoplasmic segment spans residues 151–169 (DRYNVIVKGLSAKPMTNKT). A helical membrane pass occupies residues 170 to 193 (AMLRILFIWAFSVAWTIMPLFGWN). At 194–217 (RYVPEGNMTACGTDYLTKDWVSRS) the chain is on the extracellular side. An N-linked (GlcNAc...) asparagine glycan is attached at asparagine 200. The helical transmembrane segment at 218-245 (YILVYSFFVYLLPLGTIIYSYFFILQAV) threads the bilayer. Over 246–280 (SAHEKQMREQRKKMNVASLRSAEASQTSAECKLAK) the chain is Cytoplasmic. Residues 281 to 304 (VALMTISLWFFGWTPYLIINFTGI) traverse the membrane as a helical segment. The Extracellular segment spans residues 305 to 311 (FETMKIS). Residues 312–336 (PLLTIWGSLFAKANAVFNPIVYGIS) traverse the membrane as a helical segment. An N6-(retinylidene)lysine modification is found at lysine 323. At 337–381 (HPKYRAALEKKFPSLACASSSDDNTSVASGATTVSDEKSEKSASA) the chain is on the cytoplasmic side. Residues 354–370 (ASSSDDNTSVASGATTV) show a composition bias toward polar residues. A disordered region spans residues 354-381 (ASSSDDNTSVASGATTVSDEKSEKSASA). Residues 371–381 (SDEKSEKSASA) show a composition bias toward basic and acidic residues.

The protein belongs to the G-protein coupled receptor 1 family. Opsin subfamily. In terms of processing, phosphorylated on some or all of the serine and threonine residues present in the C-terminal region.

The protein resides in the cell projection. The protein localises to the rhabdomere membrane. Its function is as follows. Visual pigments are the light-absorbing molecules that mediate vision. They consist of an apoprotein, opsin, covalently linked to cis-retinal. The protein is Opsin-1 (Lo1) of Schistocerca gregaria (Desert locust).